A 284-amino-acid polypeptide reads, in one-letter code: P2R1A-PPP2R2A-interacting phosphatase regulator 1 (284 aa).

A disordered region spans residues Met-1–Arg-65. A compositionally biased stretch (gly residues) spans Glu-20–Leu-29. Phosphoserine is present on Ser-32. Phosphoserine; by CHEK1 is present on Ser-34. Residues Ser-42, Ser-45, Ser-59, and Ser-73 each carry the phosphoserine modification. Lys-86 participates in a covalent cross-link: Glycyl lysine isopeptide (Lys-Gly) (interchain with G-Cter in SUMO1). Residues Ser-140 and Ser-144 each carry the phosphoserine modification. A Phosphothreonine modification is found at Thr-146. A disordered region spans residues Ser-164 to Gln-185. The segment covering Pro-175–Gln-185 has biased composition (low complexity). Residues Ser-184 and Ser-186 each carry the phosphoserine modification. Residues Gly-233–Lys-284 form a disordered region. Positions Gly-243–Ser-254 are enriched in low complexity. Over residues Ala-256–Ser-267 the composition is skewed to polar residues. Ser-264, Ser-267, and Ser-273 each carry phosphoserine.

This sequence belongs to the FAM122 family. Interacts with PPP2CA and PPP2R1A. Interacts (via its N-terminus) with PPP2R2A; the interaction is direct and this interaction inhibits PP2A activity. The CHEK1-mediated Ser-34 phosphorylated form interacts with 14-3-3 proteins. Post-translationally, CHEK1-mediated phosphorylation at Ser-34 negatively regulates its ability to inhibit serine/threonine-protein phosphatase 2A (PP2A) activity. Phosphorylation leads to its release from the PP2A complex and its sequestration by 14-3-3 proteins in the cytoplasm resulting in its inability to translocate to the nucleus, where it otherwise inhibits PP2A.

It localises to the nucleus. The protein localises to the cytoplasm. In terms of biological role, acts as an inhibitor of serine/threonine-protein phosphatase 2A (PP2A) activity. Inhibits PP2A activity by blocking the substrate binding site on PPP2R2A and the active site of PPP2CA. Potentiates ubiquitin-mediated proteasomal degradation of serine/threonine-protein phosphatase 2A catalytic subunit alpha (PPP2CA). Inhibits PP2A-mediated dephosphorylation of WEE1, promoting ubiquitin-mediated proteolysis of WEE1, thereby releasing G2/M checkpoint. The polypeptide is P2R1A-PPP2R2A-interacting phosphatase regulator 1 (Mus musculus (Mouse)).